The chain runs to 106 residues: Iron-sulfur cluster assembly protein CyaY (106 aa).

Belongs to the frataxin family.

Involved in iron-sulfur (Fe-S) cluster assembly. May act as a regulator of Fe-S biogenesis. This is Iron-sulfur cluster assembly protein CyaY from Salmonella arizonae (strain ATCC BAA-731 / CDC346-86 / RSK2980).